A 333-amino-acid chain; its full sequence is Homocysteine S-methyltransferase 2 (333 aa).

A Hcy-binding domain is found at 8 to 327; that stretch reads SMKDFLKQTG…TTIRAIHKRL (320 aa). Residues Cys-245, Cys-312, and Cys-313 each contribute to the Zn(2+) site.

In terms of assembly, monomer. The cofactor is Zn(2+). As to expression, expressed predominantly in roots. Expressed in rosette leaves, cauline leaves and developing seeds.

It catalyses the reaction S-methyl-L-methionine + L-homocysteine = 2 L-methionine + H(+). In terms of biological role, catalyzes methyl transfer from S-methylmethionine (SMM) to adenosyl-L-homocysteine (AdoMet). SMM degradation (by HMT-1, HMT-2 and HMT-3) and biosynthesis (by MMT1) constitute the SMM cycle in plants, which is probably required to achieve short term control of AdoMet level. The sequence is that of Homocysteine S-methyltransferase 2 (HMT-2) from Arabidopsis thaliana (Mouse-ear cress).